The chain runs to 165 residues: Ribonuclease H2 subunit C (165 aa).

Methionine 1 bears the N-acetylmethionine mark.

It belongs to the RNase H2 subunit C family. As to quaternary structure, the RNase H2 complex is a heterotrimer composed of the catalytic subunit RNASEH2A and the non-catalytic subunits RNASEH2B and RNASEH2C.

The protein localises to the nucleus. Non catalytic subunit of RNase H2, an endonuclease that specifically degrades the RNA of RNA:DNA hybrids. Participates in DNA replication, possibly by mediating the removal of lagging-strand Okazaki fragment RNA primers during DNA replication. Mediates the excision of single ribonucleotides from DNA:RNA duplexes. This chain is Ribonuclease H2 subunit C (RNASEH2C), found in Bos taurus (Bovine).